Reading from the N-terminus, the 412-residue chain is UPF0754 membrane protein MAE_37850 (412 aa).

The next 2 membrane-spanning stretches (helical) occupy residues Leu3–Thr23 and Ile387–Ile407.

Belongs to the UPF0754 family.

The protein resides in the cell inner membrane. The protein is UPF0754 membrane protein MAE_37850 of Microcystis aeruginosa (strain NIES-843 / IAM M-2473).